We begin with the raw amino-acid sequence, 179 residues long: MAKLHDYYKETVVKELVEKFEYKSIMQVPRIEKITLNMGVGEAINDKKLLENAAADMTAIAGQKPLITKARKSVAGFKIREGYPIGCKVTLRGERMWDFFERLISIAVPRIRDFRGLNPNSFDGRGNYSMGVREQIIFPEIDYDKVDRVRGLDITITTSAASDEESKALLSAFNFPFRK.

The protein belongs to the universal ribosomal protein uL5 family. As to quaternary structure, part of the 50S ribosomal subunit; part of the 5S rRNA/L5/L18/L25 subcomplex. Contacts the 5S rRNA and the P site tRNA. Forms a bridge to the 30S subunit in the 70S ribosome.

Its function is as follows. This is one of the proteins that bind and probably mediate the attachment of the 5S RNA into the large ribosomal subunit, where it forms part of the central protuberance. In the 70S ribosome it contacts protein S13 of the 30S subunit (bridge B1b), connecting the 2 subunits; this bridge is implicated in subunit movement. Contacts the P site tRNA; the 5S rRNA and some of its associated proteins might help stabilize positioning of ribosome-bound tRNAs. The polypeptide is Large ribosomal subunit protein uL5 (Photobacterium profundum (strain SS9)).